The following is a 306-amino-acid chain: Aspartate carbamoyltransferase catalytic subunit (306 aa).

Carbamoyl phosphate is bound by residues R55 and T56. K84 contacts L-aspartate. Carbamoyl phosphate contacts are provided by R105, H133, and Q136. The L-aspartate site is built by R166 and R227. The carbamoyl phosphate site is built by L265 and P266.

It belongs to the aspartate/ornithine carbamoyltransferase superfamily. ATCase family. As to quaternary structure, heterododecamer (2C3:3R2) of six catalytic PyrB chains organized as two trimers (C3), and six regulatory PyrI chains organized as three dimers (R2).

The enzyme catalyses carbamoyl phosphate + L-aspartate = N-carbamoyl-L-aspartate + phosphate + H(+). It functions in the pathway pyrimidine metabolism; UMP biosynthesis via de novo pathway; (S)-dihydroorotate from bicarbonate: step 2/3. Catalyzes the condensation of carbamoyl phosphate and aspartate to form carbamoyl aspartate and inorganic phosphate, the committed step in the de novo pyrimidine nucleotide biosynthesis pathway. This is Aspartate carbamoyltransferase catalytic subunit from Aeromonas hydrophila subsp. hydrophila (strain ATCC 7966 / DSM 30187 / BCRC 13018 / CCUG 14551 / JCM 1027 / KCTC 2358 / NCIMB 9240 / NCTC 8049).